Here is a 314-residue protein sequence, read N- to C-terminus: Aspartate carbamoyltransferase catalytic subunit (314 aa).

Carbamoyl phosphate is bound by residues Arg58 and Thr59. Lys86 is an L-aspartate binding site. Carbamoyl phosphate is bound by residues Arg108, His136, and Gln139. L-aspartate-binding residues include Arg169 and Arg223. The carbamoyl phosphate site is built by Gly264 and Pro265.

Belongs to the aspartate/ornithine carbamoyltransferase superfamily. ATCase family. In terms of assembly, heterododecamer (2C3:3R2) of six catalytic PyrB chains organized as two trimers (C3), and six regulatory PyrI chains organized as three dimers (R2).

It catalyses the reaction carbamoyl phosphate + L-aspartate = N-carbamoyl-L-aspartate + phosphate + H(+). It functions in the pathway pyrimidine metabolism; UMP biosynthesis via de novo pathway; (S)-dihydroorotate from bicarbonate: step 2/3. In terms of biological role, catalyzes the condensation of carbamoyl phosphate and aspartate to form carbamoyl aspartate and inorganic phosphate, the committed step in the de novo pyrimidine nucleotide biosynthesis pathway. The sequence is that of Aspartate carbamoyltransferase catalytic subunit from Opitutus terrae (strain DSM 11246 / JCM 15787 / PB90-1).